We begin with the raw amino-acid sequence, 458 residues long: ATP synthase subunit beta (458 aa).

Gly-148 to Thr-155 contributes to the ATP binding site.

This sequence belongs to the ATPase alpha/beta chains family. As to quaternary structure, F-type ATPases have 2 components, CF(1) - the catalytic core - and CF(0) - the membrane proton channel. CF(1) has five subunits: alpha(3), beta(3), gamma(1), delta(1), epsilon(1). CF(0) has three main subunits: a(1), b(2) and c(9-12). The alpha and beta chains form an alternating ring which encloses part of the gamma chain. CF(1) is attached to CF(0) by a central stalk formed by the gamma and epsilon chains, while a peripheral stalk is formed by the delta and b chains.

The protein localises to the cell inner membrane. The enzyme catalyses ATP + H2O + 4 H(+)(in) = ADP + phosphate + 5 H(+)(out). Produces ATP from ADP in the presence of a proton gradient across the membrane. The catalytic sites are hosted primarily by the beta subunits. The sequence is that of ATP synthase subunit beta from Shewanella halifaxensis (strain HAW-EB4).